Reading from the N-terminus, the 350-residue chain is Probable arabinogalactan endo-beta-1,4-galactanase A (350 aa).

A signal peptide spans M1–A16. The N-linked (GlcNAc...) asparagine glycan is linked to N128. E152 (proton donor) is an active-site residue. Catalysis depends on E262, which acts as the Nucleophile.

The protein belongs to the glycosyl hydrolase 53 family.

Its subcellular location is the secreted. It catalyses the reaction The enzyme specifically hydrolyzes (1-&gt;4)-beta-D-galactosidic linkages in type I arabinogalactans.. In terms of biological role, endogalactanase involved in the degradation of plant cell wall polysaccharides, and more particularly of hairy regions of pectin. This Aspergillus niger (strain ATCC MYA-4892 / CBS 513.88 / FGSC A1513) protein is Probable arabinogalactan endo-beta-1,4-galactanase A (galA).